Here is a 380-residue protein sequence, read N- to C-terminus: MKKKSVWIKADEGGWEQQKERITTGLESGADCVLVNPGDVGKVRELGNIPVATFGRDNKSGAEIIVVGKRGEGDGTKPLPLETQGSLDINAATLLRDKEVAVGGYVIIKDKRYEQFAAEMGKVCDFLIVTGTDWKVIPLENLIAELQRYDVKIIFGVKNAEEARLAFKTLETGADGVLLNSGNIQEIKDTIQAAREMENERTELESAVITRVEPLGMGDRVCVDTCNLMQKGEGMLIGSQASGMFLVNSESDDSPYVAARPFRVNAGAVHSYIKIGDKTRYLSELRTGDAVTIIDSKGRQREGFVGRVKIESRPLMLIEAKAGNRTLSAILQNAETIKLVGKDGNPISVAKLKKGDEVLVRLEEGARHFGKKIEETIIEK.

It belongs to the archaeal-type DHQ synthase family.

It carries out the reaction 2-amino-2,3,7-trideoxy-D-lyxo-hept-6-ulosonate + NAD(+) + H2O = 3-dehydroquinate + NH4(+) + NADH + H(+). Its function is as follows. Catalyzes the oxidative deamination and cyclization of 2-amino-3,7-dideoxy-D-threo-hept-6-ulosonic acid (ADH) to yield 3-dehydroquinate (DHQ), which is fed into the canonical shikimic pathway of aromatic amino acid biosynthesis. The protein is 3-dehydroquinate synthase of Methanosarcina barkeri (strain Fusaro / DSM 804).